We begin with the raw amino-acid sequence, 86 residues long: Large ribosomal subunit protein bL27 (86 aa).

Positions 1-10 are enriched in gly residues; the sequence is MAQKKGGGST. The disordered stretch occupies residues 1–20; the sequence is MAQKKGGGSTRNGRDSESKR.

Belongs to the bacterial ribosomal protein bL27 family.

The protein is Large ribosomal subunit protein bL27 of Bordetella avium (strain 197N).